The following is a 2222-amino-acid chain: DNA polymerase epsilon catalytic subunit A (2222 aa).

The tract at residues 90-110 (ETLSSGSNGGGNSNDGERVTT) is disordered. The Zn(2+) site is built by C2108, C2111, C2130, and C2133. The segment at 2108-2133 (CEYCFFISDIDFCKAAPESIFSCVRC) adopts a CysA-type zinc-finger fold. Residues C2164, C2167, C2179, and C2181 each coordinate [4Fe-4S] cluster. The short motif at 2164–2181 (CSRCHKVKRDYMSAHCPC) is the CysB motif element.

This sequence belongs to the DNA polymerase type-B family. As to quaternary structure, DNA polymerase epsilon is a heterotetramer consisting of POL2, DPB2, DPB3 and DPB4. Requires [4Fe-4S] cluster as cofactor.

It localises to the nucleus. It catalyses the reaction DNA(n) + a 2'-deoxyribonucleoside 5'-triphosphate = DNA(n+1) + diphosphate. Functionally, catalytic component of the DNA polymerase epsilon complex which participates in chromosomal DNA replication. Required during synthesis of the leading DNA strands at the replication fork, binds at/or near replication origins and moves along DNA with the replication fork. Has 3'-5' proofreading exonuclease activity that corrects errors arising during DNA replication. In Saccharomyces cerevisiae (strain ATCC 204508 / S288c) (Baker's yeast), this protein is DNA polymerase epsilon catalytic subunit A (POL2).